Here is a 212-residue protein sequence, read N- to C-terminus: Large ribosomal subunit protein uL1 (212 aa).

It belongs to the universal ribosomal protein uL1 family. As to quaternary structure, part of the 50S ribosomal subunit.

In terms of biological role, binds directly to 23S rRNA. Probably involved in E site tRNA release. Functionally, protein L1 is also a translational repressor protein, it controls the translation of its operon by binding to its mRNA. This chain is Large ribosomal subunit protein uL1, found in Haloquadratum walsbyi (strain DSM 16790 / HBSQ001).